A 309-amino-acid polypeptide reads, in one-letter code: Homoserine kinase (309 aa).

91–101 (PIGSGLGSSAC) lines the ATP pocket.

The protein belongs to the GHMP kinase family. Homoserine kinase subfamily.

The protein resides in the cytoplasm. It catalyses the reaction L-homoserine + ATP = O-phospho-L-homoserine + ADP + H(+). Its pathway is amino-acid biosynthesis; L-threonine biosynthesis; L-threonine from L-aspartate: step 4/5. Catalyzes the ATP-dependent phosphorylation of L-homoserine to L-homoserine phosphate. This chain is Homoserine kinase, found in Buchnera aphidicola subsp. Acyrthosiphon pisum (strain APS) (Acyrthosiphon pisum symbiotic bacterium).